The sequence spans 374 residues: 2-oxoglutarate-Fe(II) type oxidoreductase ppzC (374 aa).

Residues 111–131 form a disordered region; the sequence is KKGPFDSGYRGPGTQRVNPDE. One can recognise a Fe2OG dioxygenase domain in the interval 220–330; the sequence is YPDASLEINF…RVSMPFFWGF (111 aa). Residues His-254, Asp-256, and His-311 each coordinate Fe cation. Residue Arg-321 participates in 2-oxoglutarate binding.

This sequence belongs to the iron/ascorbate-dependent oxidoreductase family. The cofactor is Fe(2+).

It carries out the reaction peramine + 2-oxoglutarate + O2 = 8-hydroxyperamine + succinate + CO2. It participates in secondary metabolite biosynthesis. In terms of biological role, 2-oxoglutarate-Fe(II) type oxidoreductase; part of the gene cluster that mediates the biosynthesis of pyrrolopyrazines, secondary metabolites showing insecticidal activity. Within the pathway, ppzC uses peramine as substrate for hydroxylation to yield the novel analog 8-hydroxyperamine. The single multifunctional NRPS ppzA is sufficient to produce peramine via condensation of 1-pyrroline-5-carboxylate and arginine, N-methylation of the alpha-amino group of arginine and reduction of the thioester and the cyclization to form an iminium ion resulting in release from the peptide synthetase. Deprotonation of this intermediate and oxidation of the pyrroline ring would give rise to peramine. In Epichloe species that produce only peramine, the peramine synthetase gene is not localized in a gene cluster, in contrast to Metarhizium species that contain additional pyrrolopyrazine biosynthesis genes. The 2-oxoglutarate-Fe(II) type oxidoreductase ppzC hydroxylates peramine to yield the newly identified compound 8-hydroxyperamine whereas ppzD converts L-proline into trans-4-hydroxy-L-proline, a precursor of peramine biosynthesis. This chain is 2-oxoglutarate-Fe(II) type oxidoreductase ppzC (ppzC), found in Metarhizium majus (strain ARSEF 297).